A 468-amino-acid polypeptide reads, in one-letter code: Pituitary adenylate cyclase-activating polypeptide type I receptor (468 aa).

The first 20 residues, 1-20 (MAGVVHVSLAALLLLPMAPA), serve as a signal peptide directing secretion. At 21–152 (MHSDCIFKKE…TGDQDYYYLS (132 aa)) the chain is on the extracellular side. 3 disulfide bridges follow: Cys-34–Cys-63, Cys-54–Cys-118, and Cys-77–Cys-134. Asn-48, Asn-60, and Asn-117 each carry an N-linked (GlcNAc...) asparagine glycan. The tract at residues 125-139 (EPFPHYFDACGFDEY) is important for ADCYAP1/PACAP ligand binding and specificity. The chain crosses the membrane as a helical span at residues 153–177 (VKALYTVGYSTSLVTLTTAMVILCR). Over 178 to 187 (FRKLHCTRNF) the chain is Cytoplasmic. A helical membrane pass occupies residues 188-208 (IHMNLFVSFMLRAISVFIKDW). At 209–223 (ILYAEQDSNHCFIST) the chain is on the extracellular side. A helical transmembrane segment spans residues 224–249 (VECKAVMVFFHYCVVSNYFWLFIEGL). Cys-226 and Cys-296 are joined by a disulfide. Topologically, residues 250–267 (YLFTLLVETFFPERRYFY) are cytoplasmic. Residues 268 to 290 (WYTIIGWGTPTVCVTVWATLRLY) traverse the membrane as a helical segment. At 291–302 (FDDTGCWDMNDS) the chain is on the extracellular side. N-linked (GlcNAc...) asparagine glycosylation is present at Asn-300. Residues 303–329 (TALWWVIKGPVVGSIMVNFVLFIGIIV) traverse the membrane as a helical segment. Over 330-347 (ILVQKLQSPDMGGNESSI) the chain is Cytoplasmic. Residues 348–374 (YLRLARSTLLLIPLFGIHYTVFAFSPE) form a helical membrane-spanning segment. An N-linked (GlcNAc...) asparagine glycan is attached at Asn-375. The Extracellular segment spans residues 375-379 (NVSKR). Residues 380–403 (ERLVFELGLGSFQGFVVAVLYCFL) traverse the membrane as a helical segment. Over 404–468 (NGEVQAEIKR…SGLPADNLAT (65 aa)) the chain is Cytoplasmic. A phosphoserine mark is found at Ser-434 and Ser-447.

This sequence belongs to the G-protein coupled receptor 2 family. Interacts with maxadilan, a vasodilator peptide from Lutzomyia longipalpis saliva; the interaction results in ADCYAP1R1 activation. Most abundant in the brain, low expression in the lung, liver, thymus, spleen, pancreas and placenta.

The protein localises to the cell membrane. Several synthetic peptides derived from maxadilan, a vasodilator peptide from Lutzomyia longipalpis saliva, act as antagonists for ADCYAP1R1. G protein-coupled receptor activated by the neuropeptide pituitary adenylate cyclase-activating polypeptide (ADCYAP1/PACAP). Binds both PACAP27 and PACAP38 bioactive peptides. Ligand binding causes a conformation change that triggers signaling via guanine nucleotide-binding proteins (G proteins) and modulates the activity of downstream effectors. Activates cAMP-dependent pathway. May regulate the release of adrenocorticotropin, luteinizing hormone, growth hormone, prolactin, epinephrine, and catecholamine. May play a role in spermatogenesis and sperm motility. Causes smooth muscle relaxation and secretion in the gastrointestinal tract. The protein is Pituitary adenylate cyclase-activating polypeptide type I receptor of Homo sapiens (Human).